The sequence spans 399 residues: Acetate kinase (399 aa).

Asn9 provides a ligand contact to Mg(2+). Lys16 provides a ligand contact to ATP. Arg90 provides a ligand contact to substrate. Asp147 serves as the catalytic Proton donor/acceptor. ATP is bound by residues 207 to 211 (HLGNG), 281 to 283 (DFR), and 333 to 337 (GVGEN). Glu387 is a Mg(2+) binding site.

Belongs to the acetokinase family. Homodimer. Requires Mg(2+) as cofactor. The cofactor is Mn(2+).

It localises to the cytoplasm. The catalysed reaction is acetate + ATP = acetyl phosphate + ADP. It participates in metabolic intermediate biosynthesis; acetyl-CoA biosynthesis; acetyl-CoA from acetate: step 1/2. Catalyzes the formation of acetyl phosphate from acetate and ATP. Can also catalyze the reverse reaction. The chain is Acetate kinase from Mycobacterium sp. (strain KMS).